Reading from the N-terminus, the 342-residue chain is Succinylglutamate desuccinylase (342 aa).

Zn(2+) is bound by residues His-63, Glu-66, and His-155. Glu-219 is a catalytic residue.

Belongs to the AspA/AstE family. Succinylglutamate desuccinylase subfamily. Requires Zn(2+) as cofactor.

It catalyses the reaction N-succinyl-L-glutamate + H2O = L-glutamate + succinate. It functions in the pathway amino-acid degradation; L-arginine degradation via AST pathway; L-glutamate and succinate from L-arginine: step 5/5. Its function is as follows. Transforms N(2)-succinylglutamate into succinate and glutamate. This Vibrio vulnificus (strain YJ016) protein is Succinylglutamate desuccinylase.